We begin with the raw amino-acid sequence, 373 residues long: Dual-specificity RNA methyltransferase RlmN (373 aa).

The active-site Proton acceptor is Glu94. One can recognise a Radical SAM core domain in the interval 100-339 (EDDRATLCVS…VIVRKTRGDD (240 aa)). The cysteines at positions 107 and 344 are disulfide-linked. [4Fe-4S] cluster contacts are provided by Cys114, Cys118, and Cys121. S-adenosyl-L-methionine-binding positions include 168–169 (GE), Ser200, 222–224 (SIH), and Asn301. Cys344 serves as the catalytic S-methylcysteine intermediate.

It belongs to the radical SAM superfamily. RlmN family. [4Fe-4S] cluster serves as cofactor.

Its subcellular location is the cytoplasm. The catalysed reaction is adenosine(2503) in 23S rRNA + 2 reduced [2Fe-2S]-[ferredoxin] + 2 S-adenosyl-L-methionine = 2-methyladenosine(2503) in 23S rRNA + 5'-deoxyadenosine + L-methionine + 2 oxidized [2Fe-2S]-[ferredoxin] + S-adenosyl-L-homocysteine. It carries out the reaction adenosine(37) in tRNA + 2 reduced [2Fe-2S]-[ferredoxin] + 2 S-adenosyl-L-methionine = 2-methyladenosine(37) in tRNA + 5'-deoxyadenosine + L-methionine + 2 oxidized [2Fe-2S]-[ferredoxin] + S-adenosyl-L-homocysteine. Functionally, specifically methylates position 2 of adenine 2503 in 23S rRNA and position 2 of adenine 37 in tRNAs. m2A2503 modification seems to play a crucial role in the proofreading step occurring at the peptidyl transferase center and thus would serve to optimize ribosomal fidelity. The protein is Dual-specificity RNA methyltransferase RlmN of Shewanella amazonensis (strain ATCC BAA-1098 / SB2B).